A 507-amino-acid polypeptide reads, in one-letter code: Alkyl hydroperoxide reductase subunit F (507 aa).

Residue 207–222 (DVLIVGGGPASGSAAI) participates in FAD binding. A disulfide bond links Cys335 and Cys338. 347–361 (DVAVIGGGNSGVEAA) is an NAD(+) binding site. Residue 467–477 (TNVPGIFAAGD) coordinates FAD.

It belongs to the class-II pyridine nucleotide-disulfide oxidoreductase family. As to quaternary structure, homodimer. The cofactor is FAD.

In terms of biological role, serves to protect the cell against DNA damage by alkyl hydroperoxides. It can use either NADH or NADPH as electron donor for direct reduction of redox dyes or of alkyl hydroperoxides when combined with the AhpC protein. This chain is Alkyl hydroperoxide reductase subunit F (ahpF), found in Staphylococcus aureus (strain NCTC 8325 / PS 47).